We begin with the raw amino-acid sequence, 304 residues long: ATP phosphoribosyltransferase (304 aa).

Belongs to the ATP phosphoribosyltransferase family. Long subfamily. Mg(2+) serves as cofactor.

It localises to the cytoplasm. It catalyses the reaction 1-(5-phospho-beta-D-ribosyl)-ATP + diphosphate = 5-phospho-alpha-D-ribose 1-diphosphate + ATP. Its pathway is amino-acid biosynthesis; L-histidine biosynthesis; L-histidine from 5-phospho-alpha-D-ribose 1-diphosphate: step 1/9. Its activity is regulated as follows. Feedback inhibited by histidine. Functionally, catalyzes the condensation of ATP and 5-phosphoribose 1-diphosphate to form N'-(5'-phosphoribosyl)-ATP (PR-ATP). Has a crucial role in the pathway because the rate of histidine biosynthesis seems to be controlled primarily by regulation of HisG enzymatic activity. The sequence is that of ATP phosphoribosyltransferase from Xanthomonas euvesicatoria pv. vesicatoria (strain 85-10) (Xanthomonas campestris pv. vesicatoria).